Reading from the N-terminus, the 428-residue chain is Serine--tRNA ligase (428 aa).

L-serine is bound at residue 235–237 (TAE). 266–268 (RSE) contributes to the ATP binding site. Glu-289 serves as a coordination point for L-serine. 353–356 (EISS) is an ATP binding site. Ser-389 serves as a coordination point for L-serine.

The protein belongs to the class-II aminoacyl-tRNA synthetase family. Type-1 seryl-tRNA synthetase subfamily. In terms of assembly, homodimer. The tRNA molecule binds across the dimer.

The protein resides in the cytoplasm. It catalyses the reaction tRNA(Ser) + L-serine + ATP = L-seryl-tRNA(Ser) + AMP + diphosphate + H(+). The catalysed reaction is tRNA(Sec) + L-serine + ATP = L-seryl-tRNA(Sec) + AMP + diphosphate + H(+). Its pathway is aminoacyl-tRNA biosynthesis; selenocysteinyl-tRNA(Sec) biosynthesis; L-seryl-tRNA(Sec) from L-serine and tRNA(Sec): step 1/1. Functionally, catalyzes the attachment of serine to tRNA(Ser). Is also able to aminoacylate tRNA(Sec) with serine, to form the misacylated tRNA L-seryl-tRNA(Sec), which will be further converted into selenocysteinyl-tRNA(Sec). This Shewanella sp. (strain W3-18-1) protein is Serine--tRNA ligase.